Consider the following 211-residue polypeptide: Probable nicotinate-nucleotide adenylyltransferase (211 aa).

It belongs to the NadD family.

The enzyme catalyses nicotinate beta-D-ribonucleotide + ATP + H(+) = deamido-NAD(+) + diphosphate. It functions in the pathway cofactor biosynthesis; NAD(+) biosynthesis; deamido-NAD(+) from nicotinate D-ribonucleotide: step 1/1. Its function is as follows. Catalyzes the reversible adenylation of nicotinate mononucleotide (NaMN) to nicotinic acid adenine dinucleotide (NaAD). The polypeptide is Probable nicotinate-nucleotide adenylyltransferase (Cellvibrio japonicus (strain Ueda107) (Pseudomonas fluorescens subsp. cellulosa)).